The chain runs to 410 residues: Ribosomal RNA large subunit methyltransferase G (410 aa).

It belongs to the methyltransferase superfamily. RlmG family.

It localises to the cytoplasm. The enzyme catalyses guanosine(1835) in 23S rRNA + S-adenosyl-L-methionine = N(2)-methylguanosine(1835) in 23S rRNA + S-adenosyl-L-homocysteine + H(+). Specifically methylates the guanine in position 1835 (m2G1835) of 23S rRNA. This chain is Ribosomal RNA large subunit methyltransferase G, found in Alteromonas mediterranea (strain DSM 17117 / CIP 110805 / LMG 28347 / Deep ecotype).